The sequence spans 370 residues: UDP-N-acetylglucosamine--N-acetylmuramyl-(pentapeptide) pyrophosphoryl-undecaprenol N-acetylglucosamine transferase (370 aa).

UDP-N-acetyl-alpha-D-glucosamine contacts are provided by residues 10 to 12, Asn-124, Ser-196, Ile-253, and Gln-298; that span reads TGG.

Belongs to the glycosyltransferase 28 family. MurG subfamily.

The protein resides in the cell membrane. The catalysed reaction is Mur2Ac(oyl-L-Ala-gamma-D-Glu-L-Lys-D-Ala-D-Ala)-di-trans,octa-cis-undecaprenyl diphosphate + UDP-N-acetyl-alpha-D-glucosamine = beta-D-GlcNAc-(1-&gt;4)-Mur2Ac(oyl-L-Ala-gamma-D-Glu-L-Lys-D-Ala-D-Ala)-di-trans,octa-cis-undecaprenyl diphosphate + UDP + H(+). It functions in the pathway cell wall biogenesis; peptidoglycan biosynthesis. In terms of biological role, cell wall formation. Catalyzes the transfer of a GlcNAc subunit on undecaprenyl-pyrophosphoryl-MurNAc-pentapeptide (lipid intermediate I) to form undecaprenyl-pyrophosphoryl-MurNAc-(pentapeptide)GlcNAc (lipid intermediate II). The sequence is that of UDP-N-acetylglucosamine--N-acetylmuramyl-(pentapeptide) pyrophosphoryl-undecaprenol N-acetylglucosamine transferase from Limosilactobacillus reuteri subsp. reuteri (strain JCM 1112) (Lactobacillus reuteri).